Consider the following 97-residue polypeptide: Down syndrome critical region protein 8 (97 aa).

As to expression, expressed in numerous tissues; not found in breast, heart, small intestine and liver. Isoform 1: Predominantly expressed in the testis. Isoform 3: Predominantly expressed in the testis, at lower level in the placenta, during malignant progression of melanocytic tumors and in several tumors of varying origins. Isoform 4: Predominantly expressed in the testis, at lower level in the placenta, during malignant progression of melanocytic tumors and in several tumors of varying origins. Isoform 5: Predominantly expressed in the testis. Isoform 6: Predominantly expressed in the testis.

This is Down syndrome critical region protein 8 from Homo sapiens (Human).